The following is a 68-amino-acid chain: DNA-directed RNA polymerase subunit omega (68 aa).

The protein belongs to the RNA polymerase subunit omega family. The RNAP catalytic core consists of 2 alpha, 1 beta, 1 beta' and 1 omega subunit. When a sigma factor is associated with the core the holoenzyme is formed, which can initiate transcription.

It carries out the reaction RNA(n) + a ribonucleoside 5'-triphosphate = RNA(n+1) + diphosphate. Promotes RNA polymerase assembly. Latches the N- and C-terminal regions of the beta' subunit thereby facilitating its interaction with the beta and alpha subunits. This Alkaliphilus metalliredigens (strain QYMF) protein is DNA-directed RNA polymerase subunit omega.